Consider the following 305-residue polypeptide: Acetylglutamate kinase (305 aa).

Residues 67–68 (GG), arginine 89, and asparagine 190 contribute to the substrate site.

Belongs to the acetylglutamate kinase family. ArgB subfamily.

The protein localises to the cytoplasm. It carries out the reaction N-acetyl-L-glutamate + ATP = N-acetyl-L-glutamyl 5-phosphate + ADP. It functions in the pathway amino-acid biosynthesis; L-arginine biosynthesis; N(2)-acetyl-L-ornithine from L-glutamate: step 2/4. Catalyzes the ATP-dependent phosphorylation of N-acetyl-L-glutamate. This chain is Acetylglutamate kinase, found in Bifidobacterium animalis subsp. lactis (strain AD011).